Consider the following 385-residue polypeptide: Homoserine O-succinyltransferase (385 aa).

An AB hydrolase-1 domain is found at 45-355 (NAVLVCHALN…PHGHDAFLLD (311 aa)). Serine 151 functions as the Nucleophile in the catalytic mechanism. Residue arginine 221 coordinates substrate. Active-site residues include aspartate 316 and histidine 349. A substrate-binding site is contributed by aspartate 350.

This sequence belongs to the AB hydrolase superfamily. MetX family. As to quaternary structure, homodimer.

It is found in the cytoplasm. It catalyses the reaction L-homoserine + succinyl-CoA = O-succinyl-L-homoserine + CoA. Its pathway is amino-acid biosynthesis; L-methionine biosynthesis via de novo pathway; O-succinyl-L-homoserine from L-homoserine: step 1/1. In terms of biological role, transfers a succinyl group from succinyl-CoA to L-homoserine, forming succinyl-L-homoserine. The protein is Homoserine O-succinyltransferase of Janthinobacterium sp. (strain Marseille) (Minibacterium massiliensis).